We begin with the raw amino-acid sequence, 111 residues long: Nucleoid-associated protein SynRCC307_0025 (111 aa).

The protein belongs to the YbaB/EbfC family. Homodimer.

The protein resides in the cytoplasm. The protein localises to the nucleoid. Its function is as follows. Binds to DNA and alters its conformation. May be involved in regulation of gene expression, nucleoid organization and DNA protection. This Synechococcus sp. (strain RCC307) protein is Nucleoid-associated protein SynRCC307_0025.